The primary structure comprises 126 residues: Holo-[acyl-carrier-protein] synthase (126 aa).

Mg(2+)-binding residues include Asp-9 and Glu-58.

Belongs to the P-Pant transferase superfamily. AcpS family. Mg(2+) is required as a cofactor.

The protein resides in the cytoplasm. It catalyses the reaction apo-[ACP] + CoA = holo-[ACP] + adenosine 3',5'-bisphosphate + H(+). Functionally, transfers the 4'-phosphopantetheine moiety from coenzyme A to a Ser of acyl-carrier-protein. The polypeptide is Holo-[acyl-carrier-protein] synthase (Buchnera aphidicola subsp. Schizaphis graminum (strain Sg)).